The following is a 238-amino-acid chain: Peroxisomal biogenesis factor 11 (238 aa).

Belongs to the peroxin-11 family.

The protein resides in the mitochondrion. It localises to the peroxisome membrane. Functionally, involved in peroxisomal proliferation. Promotes peroxisome division and biogenesis. This is Peroxisomal biogenesis factor 11 (pex11) from Schizosaccharomyces pombe (strain 972 / ATCC 24843) (Fission yeast).